The chain runs to 274 residues: Large ribosomal subunit protein uL2 (274 aa).

Disordered stretches follow at residues 21 to 59 (KVGL…GGHK) and 224 to 274 (AMNP…QLKG). Positions 32–42 (SLTSGKKSSGG) are enriched in low complexity. Basic residues predominate over residues 45-59 (NHGRITTRHRGGGHK). Over residues 263–274 (KSSDKYIKQLKG) the composition is skewed to basic and acidic residues.

The protein belongs to the universal ribosomal protein uL2 family. As to quaternary structure, part of the 50S ribosomal subunit. Forms a bridge to the 30S subunit in the 70S ribosome.

Its function is as follows. One of the primary rRNA binding proteins. Required for association of the 30S and 50S subunits to form the 70S ribosome, for tRNA binding and peptide bond formation. It has been suggested to have peptidyltransferase activity; this is somewhat controversial. Makes several contacts with the 16S rRNA in the 70S ribosome. The sequence is that of Large ribosomal subunit protein uL2 from Wolbachia pipientis wMel.